We begin with the raw amino-acid sequence, 94 residues long: Co-chaperonin GroES (94 aa).

Belongs to the GroES chaperonin family. As to quaternary structure, heptamer of 7 subunits arranged in a ring. Interacts with the chaperonin GroEL.

It localises to the cytoplasm. In terms of biological role, together with the chaperonin GroEL, plays an essential role in assisting protein folding. The GroEL-GroES system forms a nano-cage that allows encapsulation of the non-native substrate proteins and provides a physical environment optimized to promote and accelerate protein folding. GroES binds to the apical surface of the GroEL ring, thereby capping the opening of the GroEL channel. In Bacillus licheniformis (strain ATCC 14580 / DSM 13 / JCM 2505 / CCUG 7422 / NBRC 12200 / NCIMB 9375 / NCTC 10341 / NRRL NRS-1264 / Gibson 46), this protein is Co-chaperonin GroES.